Here is a 34-residue protein sequence, read N- to C-terminus: MSDIN-like toxin proprotein 3 (34 aa).

A propeptide spanning residues 1–10 is cleaved from the precursor; it reads MSDINTARLP. The segment at residues 11–20 is a cross-link (cyclopeptide (Phe-Pro)); that stretch reads FFQPPEFRPP. Residues 21–34 constitute a propeptide that is removed on maturation; that stretch reads CVGDDIEMVLTRGE.

Belongs to the MSDIN fungal toxin family. Post-translationally, processed by the macrocyclase-peptidase enzyme POPB to yield a toxic cyclic decapeptide. POPB first removes 10 residues from the N-terminus. Conformational trapping of the remaining peptide forces the enzyme to release this intermediate rather than proceed to macrocyclization. The enzyme rebinds the remaining peptide in a different conformation and catalyzes macrocyclization of the N-terminal 10 residues.

Its function is as follows. Probable toxin that belongs to the MSDIN-like toxin family responsible for a large number of food poisoning cases and deaths. The protein is MSDIN-like toxin proprotein 3 of Amanita bisporigera (Destroying angel).